The chain runs to 138 residues: Large ribosomal subunit protein eL27 (138 aa).

It belongs to the eukaryotic ribosomal protein eL27 family.

This is Large ribosomal subunit protein eL27 (RPL27) from Solanum tuberosum (Potato).